Reading from the N-terminus, the 192-residue chain is Glycerol-3-phosphate acyltransferase (192 aa).

A run of 5 helical transmembrane segments spans residues 5 to 25 (VVLI…ITRI), 50 to 70 (FLAA…VYIA), 78 to 98 (DFYI…PIWL), 112 to 132 (ILIA…IIVF), and 153 to 173 (SFFF…LVFL).

This sequence belongs to the PlsY family. In terms of assembly, probably interacts with PlsX.

Its subcellular location is the cell membrane. It carries out the reaction an acyl phosphate + sn-glycerol 3-phosphate = a 1-acyl-sn-glycero-3-phosphate + phosphate. Its pathway is lipid metabolism; phospholipid metabolism. Functionally, catalyzes the transfer of an acyl group from acyl-phosphate (acyl-PO(4)) to glycerol-3-phosphate (G3P) to form lysophosphatidic acid (LPA). This enzyme utilizes acyl-phosphate as fatty acyl donor, but not acyl-CoA or acyl-ACP. In Wolbachia pipientis wMel, this protein is Glycerol-3-phosphate acyltransferase.